Consider the following 559-residue polypeptide: Dihydroxy-acid dehydratase (559 aa).

Cys49 provides a ligand contact to [2Fe-2S] cluster. Position 81 (Asp81) interacts with Mg(2+). Cys122 contacts [2Fe-2S] cluster. The Mg(2+) site is built by Asp123 and Lys124. Lys124 bears the N6-carboxylysine mark. A [2Fe-2S] cluster-binding site is contributed by Cys194. Glu446 serves as a coordination point for Mg(2+). Catalysis depends on Ser472, which acts as the Proton acceptor.

It belongs to the IlvD/Edd family. In terms of assembly, homodimer. It depends on [2Fe-2S] cluster as a cofactor. Requires Mg(2+) as cofactor.

The enzyme catalyses (2R)-2,3-dihydroxy-3-methylbutanoate = 3-methyl-2-oxobutanoate + H2O. It carries out the reaction (2R,3R)-2,3-dihydroxy-3-methylpentanoate = (S)-3-methyl-2-oxopentanoate + H2O. It participates in amino-acid biosynthesis; L-isoleucine biosynthesis; L-isoleucine from 2-oxobutanoate: step 3/4. The protein operates within amino-acid biosynthesis; L-valine biosynthesis; L-valine from pyruvate: step 3/4. In terms of biological role, functions in the biosynthesis of branched-chain amino acids. Catalyzes the dehydration of (2R,3R)-2,3-dihydroxy-3-methylpentanoate (2,3-dihydroxy-3-methylvalerate) into 2-oxo-3-methylpentanoate (2-oxo-3-methylvalerate) and of (2R)-2,3-dihydroxy-3-methylbutanoate (2,3-dihydroxyisovalerate) into 2-oxo-3-methylbutanoate (2-oxoisovalerate), the penultimate precursor to L-isoleucine and L-valine, respectively. The chain is Dihydroxy-acid dehydratase from Prochlorococcus marinus subsp. pastoris (strain CCMP1986 / NIES-2087 / MED4).